We begin with the raw amino-acid sequence, 72 residues long: MSYQQQQCKQPCQPPPVCPTPKCPEPCPPPKCPEPCPPPKCPQPCPPQQCQQKYPPVTPSPPCQSKYPPKSK.

A compositionally biased stretch (low complexity) spans 1-11; the sequence is MSYQQQQCKQP. The segment at 1-20 is disordered; the sequence is MSYQQQQCKQPCQPPPVCPT. Repeat copies occupy residues 21-29, 30-38, and 39-47. A 3 X 9 AA tandem repeats of P-K-C-P-[EQ]-P-C-P-P region spans residues 21–47; it reads PKCPEPCPPPKCPEPCPPPKCPQPCPP. A disordered region spans residues 42-72; it reads PQPCPPQQCQQKYPPVTPSPPCQSKYPPKSK.

The protein belongs to the cornifin (SPRR) family. Forms five pairs of intrachain disulfide bonds. In terms of tissue distribution, expressed in intestine; selectively expressed in goblet cells.

Its subcellular location is the secreted. The protein localises to the extracellular space. It localises to the cytoplasmic vesicle. It is found in the secretory vesicle. Its function is as follows. Gut bactericidal protein that selectively kills Gram-positive bacteria by binding to negatively charged lipids on bacterial membranes, leading to bacterial membrane permeabilization and disruption. Specifically binds lipids bearing negatively charged headgroups, such as phosphatidic acid, phosphatidylserine (PS), cardiolipin (CL), and phosphatidylinositol phosphates, but not to zwitterionic or neutral lipids. Induced by type-2 cytokines in response to helminth infection and is required to protect against helminth-induced bacterial invasion of intestinal tissue. May also be involved in the development of the cornified envelope of squamous epithelia; however, additional evidences are required to confirm this result in vivo. In Homo sapiens (Human), this protein is Small proline-rich protein 2A.